The following is a 210-amino-acid chain: Ribosomal RNA small subunit methyltransferase G (210 aa).

S-adenosyl-L-methionine is bound by residues glycine 74, phenylalanine 79, 127–128 (IE), and arginine 143.

The protein belongs to the methyltransferase superfamily. RNA methyltransferase RsmG family.

It localises to the cytoplasm. The enzyme catalyses guanosine(527) in 16S rRNA + S-adenosyl-L-methionine = N(7)-methylguanosine(527) in 16S rRNA + S-adenosyl-L-homocysteine. In terms of biological role, specifically methylates the N7 position of guanine in position 527 of 16S rRNA. The polypeptide is Ribosomal RNA small subunit methyltransferase G (Chelativorans sp. (strain BNC1)).